A 504-amino-acid chain; its full sequence is MRFFCARCCSFGPEMPAVQLLLLACLVWDVGARTAQLRKANDQSGRCQYTFSVASPNESSCPEQSQAMSVIHNLQRDSSTQRLDLEATKARLSSLESLLHQLTLDQAARPQETQEGLQRELGTLRRERDQLETQTRELETAYSNLLRDKSVLEEEKKRLRQENENLARRLESSSQEVARLRRGQCPQTRDTARAVPPGSREVSTWNLDTLAFQELKSELTEVPASRILKESPSGYLRSGEGDTGCGELVWVGEPLTLRTAETITGKYGVWMRDPKPTYPYTQETTWRIDTVGTDVRQVFEYDLISQFMQGYPSKVHILPRPLESTGAVVYSGSLYFQGAESRTVIRYELNTETVKAEKEIPGAGYHGQFPYSWGGYTDIDLAVDEAGLWVIYSTDEAKGAIVLSKLNPENLELEQTWETNIRKQSVANAFIICGTLYTVSSYTSADATVNFAYDTGTGISKTLTIPFKNRYKYSSMIDYNPLEKKLFAWDNLNMVTYDIKLSKM.

The N-terminal stretch at 1–32 (MRFFCARCCSFGPEMPAVQLLLLACLVWDVGA) is a signal peptide. The N-linked (GlcNAc...) asparagine glycan is linked to Asn-57. The stretch at 74-184 (LQRDSSTQRL…QEVARLRRGQ (111 aa)) forms a coiled coil. Disordered regions lie at residues 106–131 (QAARPQETQEGLQRELGTLRRERDQL) and 170–200 (LESSSQEVARLRRGQCPQTRDTARAVPPGSR). Residues 122 to 131 (GTLRRERDQL) are compositionally biased toward basic and acidic residues. The Olfactomedin-like domain maps to 244 to 503 (GCGELVWVGE…MVTYDIKLSK (260 aa)). Cysteines 245 and 433 form a disulfide. Residues Asp-380, Asn-428, Ala-429, Ile-477, and Asp-478 each contribute to the Ca(2+) site. Residues 502–504 (SKM) carry the Microbody targeting signal motif.

As to quaternary structure, homodimer (via N-terminus). Can also form higher oligomers. Interacts with OLFM3, FN1, NRCAM, GLDN and NFASC. Interacts (via N-terminus) with MYL2. Interacts with SFRP1, FRZB, FZD7, FZD10, FZD1 and WIF1; regulates Wnt signaling. Interacts with SNTA1; regulates muscle hypertrophy. Interacts with ERBB2 and ERBB3; activates ERBB2-ERBB3 signaling pathway. Interacts with SNCG; affects its secretion and its aggregation. In terms of processing, different isoforms may arise by post-translational modifications. Glycosylated. Post-translationally, palmitoylated. In terms of processing, undergoes a calcium-dependent proteolytic cleavage at Arg-226 by CAPN2 in the endoplasmic reticulum. The result is the production of two fragments, one of 35 kDa containing the C-terminal olfactomedin-like domain, and another of 20 kDa containing the N-terminal leucine zipper-like domain. Detected in aqueous humor. Detected in the eye (at protein level). Widely expressed. Highly expressed in various types of muscle, ciliary body, papillary sphincter, skeletal muscle, heart, and bone marrow-derived mesenchymal stem cells. Expressed predominantly in the retina. In normal eyes, found in the inner uveal meshwork region and the anterior portion of the meshwork. In contrast, in many glaucomatous eyes, it is found in more regions of the meshwork and seems to be expressed at higher levels than in normal eyes, regardless of the type or clinical severity of glaucoma. The myocilin 35 kDa fragment is detected in aqueous humor and to a lesser extent in iris and ciliary body.

It localises to the secreted. Its subcellular location is the golgi apparatus. The protein resides in the cytoplasmic vesicle. The protein localises to the extracellular space. It is found in the extracellular matrix. It localises to the extracellular exosome. Its subcellular location is the mitochondrion. The protein resides in the mitochondrion intermembrane space. The protein localises to the mitochondrion inner membrane. It is found in the mitochondrion outer membrane. It localises to the rough endoplasmic reticulum. Its subcellular location is the cell projection. The protein resides in the cilium. The protein localises to the endoplasmic reticulum. Its function is as follows. Secreted glycoprotein regulating the activation of different signaling pathways in adjacent cells to control different processes including cell adhesion, cell-matrix adhesion, cytoskeleton organization and cell migration. Promotes substrate adhesion, spreading and formation of focal contacts. Negatively regulates cell-matrix adhesion and stress fiber assembly through Rho protein signal transduction. Modulates the organization of actin cytoskeleton by stimulating the formation of stress fibers through interactions with components of Wnt signaling pathways. Promotes cell migration through activation of PTK2 and the downstream phosphatidylinositol 3-kinase signaling. Plays a role in bone formation and promotes osteoblast differentiation in a dose-dependent manner through mitogen-activated protein kinase signaling. Mediates myelination in the peripheral nervous system through ERBB2/ERBB3 signaling. Plays a role as a regulator of muscle hypertrophy through the components of dystrophin-associated protein complex. Involved in positive regulation of mitochondrial depolarization. Plays a role in neurite outgrowth. May participate in the obstruction of fluid outflow in the trabecular meshwork. The sequence is that of Myocilin (MYOC) from Homo sapiens (Human).